A 303-amino-acid chain; its full sequence is Acetylglutamate kinase (303 aa).

Substrate is bound by residues G69–G70, R91, and N190.

Belongs to the acetylglutamate kinase family. ArgB subfamily.

It is found in the cytoplasm. The catalysed reaction is N-acetyl-L-glutamate + ATP = N-acetyl-L-glutamyl 5-phosphate + ADP. The protein operates within amino-acid biosynthesis; L-arginine biosynthesis; N(2)-acetyl-L-ornithine from L-glutamate: step 2/4. Its function is as follows. Catalyzes the ATP-dependent phosphorylation of N-acetyl-L-glutamate. This chain is Acetylglutamate kinase, found in Nocardia farcinica (strain IFM 10152).